Here is a 275-residue protein sequence, read N- to C-terminus: Phosphate import ATP-binding protein PstB 1 (275 aa).

In terms of domain architecture, ABC transporter spans 22–261; sequence LETQAVSVYY…NRTEKIFNSP (240 aa). 54-61 lines the ATP pocket; sequence GPSGCGKS.

Belongs to the ABC transporter superfamily. Phosphate importer (TC 3.A.1.7) family. The complex is composed of two ATP-binding proteins (PstB), two transmembrane proteins (PstC and PstA) and a solute-binding protein (PstS).

Its subcellular location is the cell inner membrane. The catalysed reaction is phosphate(out) + ATP + H2O = ADP + 2 phosphate(in) + H(+). Functionally, part of the ABC transporter complex PstSACB involved in phosphate import. Responsible for energy coupling to the transport system. The polypeptide is Phosphate import ATP-binding protein PstB 1 (Synechococcus sp. (strain JA-2-3B'a(2-13)) (Cyanobacteria bacterium Yellowstone B-Prime)).